We begin with the raw amino-acid sequence, 344 residues long: Dihydroorotate dehydrogenase (quinone) (344 aa).

FMN-binding positions include 65 to 69 and T89; that span reads AGLDK. K69 contributes to the substrate binding site. 114-118 is a binding site for substrate; the sequence is NRMGF. The FMN site is built by N145 and N178. Residue N178 participates in substrate binding. S181 (nucleophile) is an active-site residue. Substrate is bound at residue N183. Residues K223 and T251 each coordinate FMN. 252–253 is a substrate binding site; sequence NT. FMN-binding positions include G274, G303, and 324–325; that span reads YS.

It belongs to the dihydroorotate dehydrogenase family. Type 2 subfamily. As to quaternary structure, monomer. FMN serves as cofactor.

The protein resides in the cell membrane. It carries out the reaction (S)-dihydroorotate + a quinone = orotate + a quinol. The protein operates within pyrimidine metabolism; UMP biosynthesis via de novo pathway; orotate from (S)-dihydroorotate (quinone route): step 1/1. Functionally, catalyzes the conversion of dihydroorotate to orotate with quinone as electron acceptor. The chain is Dihydroorotate dehydrogenase (quinone) from Cupriavidus taiwanensis (strain DSM 17343 / BCRC 17206 / CCUG 44338 / CIP 107171 / LMG 19424 / R1) (Ralstonia taiwanensis (strain LMG 19424)).